Consider the following 185-residue polypeptide: Proton-translocating ferredoxin:NAD(+) oxidoreductase complex subunit G (185 aa).

The chain crosses the membrane as a helical span at residues 14–34 (TKNLTITCFISGIIIAAVYYI). Thr161 bears the FMN phosphoryl threonine mark.

Belongs to the RnfG family. In terms of assembly, the complex is composed of six subunits: RnfA, RnfB, RnfC, RnfD, RnfE and RnfG. Requires FMN as cofactor.

The protein localises to the cell membrane. In terms of biological role, part of a membrane-bound complex that couples electron transfer with translocation of ions across the membrane. Couples electron transfer from reduced ferredoxin to NAD(+) with translocation of H(+) out of the cell. Essential for energy conservation during autotrophic growth. Contributes to ATP synthesis during heterotrophic growth. This Clostridium ljungdahlii (strain ATCC 55383 / DSM 13528 / PETC) protein is Proton-translocating ferredoxin:NAD(+) oxidoreductase complex subunit G.